Reading from the N-terminus, the 336-residue chain is Eukaryotic translation initiation factor 3 subunit H (336 aa).

One can recognise an MPN domain in the interval 21–154; it reads VQCDGLAAMK…LKAYRLTPQA (134 aa).

The protein belongs to the eIF-3 subunit H family. As to quaternary structure, component of the eukaryotic translation initiation factor 3 (eIF-3) complex.

It localises to the cytoplasm. Functionally, component of the eukaryotic translation initiation factor 3 (eIF-3) complex, which is involved in protein synthesis of a specialized repertoire of mRNAs and, together with other initiation factors, stimulates binding of mRNA and methionyl-tRNAi to the 40S ribosome. The eIF-3 complex specifically targets and initiates translation of a subset of mRNAs involved in cell proliferation. The polypeptide is Eukaryotic translation initiation factor 3 subunit H (Aedes aegypti (Yellowfever mosquito)).